The chain runs to 932 residues: Chaperone protein ClpC3, chloroplastic (932 aa).

Positions M1–T20 are disordered. The transit peptide at M1–K48 directs the protein to the chloroplast. One can recognise a Clp R domain in the interval F99–D240. 2 repeat regions span residues F102–G167 and F177–D240. Positions L264–P511 are i. G309 to T316 is a binding site for ATP. A UVR domain is found at E518 to E553. The interval V579 to S770 is II. G653–S660 is a binding site for ATP.

It belongs to the ClpA/ClpB family. ClpC subfamily.

The protein resides in the plastid. It is found in the chloroplast. In terms of biological role, molecular chaperone that may interact with a ClpP-like protease involved in degradation of denatured proteins in the chloroplast. This Oryza sativa subsp. japonica (Rice) protein is Chaperone protein ClpC3, chloroplastic (CLPC3).